Reading from the N-terminus, the 1036-residue chain is ADAMTS-like protein 4 (1036 aa).

Residues 1–24 (MESWLGRLWLCMMLLLPLPQPCQD) form the signal peptide. Residues 47 to 91 (GPWGRWASCSQPCGVGVQRRSRTCELHPALPLPPRPPRHPEAHRP) form the TSP type-1 1 domain. 2 disordered regions span residues 73–149 (HPAL…IKPG) and 163–308 (HRSR…WLPL). Basic residues predominate over residues 163–173 (HRSRRHPHRPG). Over residues 215-253 (TPRSGTAQTEVLPRTSSAPSYTGTPAPTSSFGDSRSFQG) the composition is skewed to polar residues. N454 and N737 each carry an N-linked (GlcNAc...) asparagine glycan. TSP type-1 domains lie at 687-748 (CPPY…HLCG), 750-804 (WEIS…DMGP), 805-871 (CTTA…GPCE), 872-931 (RTWR…QGQA), and 932-988 (CEDK…QPCN). Residues 991–1028 (PDDQCKDSSPHCPLVVQARLCVYPYYTTTCCRSCAHVL) enclose the PLAC domain.

Interacts with CTSB. Interacts with FBN1. Glycosylated. Can be O-fucosylated by POFUT2 on a serine or a threonine residue found within the consensus sequence C1-X(2)-(S/T)-C2-G of the TSP type-1 repeat domains where C1 and C2 are the first and second cysteine residue of the repeat, respectively. Fucosylated repeats can then be further glycosylated by the addition of a beta-1,3-glucose residue by the glucosyltransferase, B3GALTL. Fucosylation mediates the efficient secretion of ADAMTS family members. Can also be C-glycosylated with one or two mannose molecules on tryptophan residues within the consensus sequence W-X-X-W of the TPRs, and N-glycosylated. These other glycosylations can also facilitate secretion. Widely expressed in a range of tissues. Especially prevalent in brain, spinal cord, muscle, lung and heart.

It is found in the secreted. The protein resides in the extracellular space. It localises to the extracellular matrix. Functionally, positive regulation of apoptosis. May facilitate FBN1 microfibril biogenesis. The sequence is that of ADAMTS-like protein 4 from Mus musculus (Mouse).